Consider the following 375-residue polypeptide: o-succinylbenzoate synthase (375 aa).

Residue Lys166 is the Proton donor of the active site. The Mg(2+) site is built by Asp191, Glu216, and Asp241. Lys265 acts as the Proton acceptor in catalysis.

Belongs to the mandelate racemase/muconate lactonizing enzyme family. MenC type 2 subfamily. As to quaternary structure, homotetramer. A divalent metal cation serves as cofactor.

The catalysed reaction is (1R,6R)-6-hydroxy-2-succinyl-cyclohexa-2,4-diene-1-carboxylate = 2-succinylbenzoate + H2O. It catalyses the reaction N-acetyl-D-methionine = N-acetyl-L-methionine. The enzyme catalyses N-acetyl-D-phenylalanine = N-acetyl-L-phenylalanine. It functions in the pathway quinol/quinone metabolism; 1,4-dihydroxy-2-naphthoate biosynthesis; 1,4-dihydroxy-2-naphthoate from chorismate: step 4/7. It participates in quinol/quinone metabolism; menaquinone biosynthesis. In terms of biological role, converts 2-succinyl-6-hydroxy-2,4-cyclohexadiene-1-carboxylate (SHCHC) to 2-succinylbenzoate (OSB). Also acts as a N-succinylamino acid racemase (NSAR) that catalyzes the racemization of various N-succinylamino acids, including N-succinyl-alanine and N-succinyl-phenylalanine. Can catalyze the racemization of a broad range of N-acylamino acids, including N-acetyl-methionine, N-acetyl-phenylalanine, N-carbamoyl-methionine, N-formyl-D-methionine, N-formyl-D-norleucine and N-carbamoyl-D-norleucine. May be a bifunctional enzyme involved in menaquinone biosynthesis and in an irreversible pathway for the conversion of D- to L-amino acids, thereby facilitating the survival and/or growth of the organism. The chain is o-succinylbenzoate synthase from Geobacillus kaustophilus.